The following is a 1098-amino-acid chain: Trehalose synthase complex regulatory subunit TSL1 (1098 aa).

Residues Ser49, Ser53, Ser56, Ser71, Ser77, Ser135, Ser147, and Ser161 each carry the phosphoserine modification. Disordered stretches follow at residues Ala59–Ser86, Ser129–Gln168, and Ser192–Lys244. Residues Arg72–Ser86 are compositionally biased toward polar residues. 2 repeat units span residues Arg144–Gln150 and Arg158–Gln164. Residues Arg144–Gln164 are 2 X 7 AA repeats of R-I-A-S-P-I-Q. The span at Arg213–Gln227 shows a compositional bias: polar residues. Residues Gly228–Ser242 show a composition bias toward low complexity. Ser229 is subject to Phosphoserine. Thr251 is modified (phosphothreonine). Positions Ala274–Pro297 are disordered. Residue Ser303 is modified to Phosphoserine. The tract at residues Gly320–Lys812 is TPS complex domain. Thr815 is subject to Phosphothreonine. Residues Ser1000–Thr1027 form a disordered region.

It in the C-terminal section; belongs to the glycosyltransferase 20 family. The trehalose synthase complex is composed of the two catalytic subunits TPS1 and TPS2, and at least one of the two regulatory subunits TPS3 or TSL1.

It is found in the cytoplasm. In terms of biological role, regulatory subunit of the trehalose synthase complex that catalyzes the production of trehalose from glucose-6-phosphate and UDP-glucose in a two step process. May stabilize the trehalose synthase complex, and confer sensitivity to physiological concentrations of phosphate and to fructose 6-phosphate. This Saccharomyces cerevisiae (strain ATCC 204508 / S288c) (Baker's yeast) protein is Trehalose synthase complex regulatory subunit TSL1 (TSL1).